The chain runs to 784 residues: Cadherin-5 (784 aa).

A signal peptide spans 1 to 24 (MQRLTELATALGAFLGLLAVAAMA). Residues 25 to 45 (GPNFPQIDTPNMLPAHHRQKR) constitute a propeptide that is removed on maturation. 5 consecutive Cadherin domains span residues 46 to 149 (DWIW…WPVF), 150 to 256 (SHQV…FPVF), 257 to 371 (TQST…PPVF), 372 to 476 (QRHF…DNPP), and 477 to 593 (EFAQ…MAAQ). Topologically, residues 46-599 (DWIWNQMHID…MAAQAGVSIQ (554 aa)) are extracellular. Positions 56 and 57 each coordinate Ca(2+). An N-linked (GlcNAc...) asparagine glycan is attached at Asn-59. Residues Asp-107, Glu-109, Asp-141, Ile-142, Asn-143, Asp-144, and Asn-145 each contribute to the Ca(2+) site. An N-linked (GlcNAc...) asparagine glycan is attached at Asn-155. Ca(2+)-binding residues include Asp-175, Asp-177, His-184, and Asp-229. Asn-441, Asn-523, and Asn-535 each carry an N-linked (GlcNAc...) asparagine glycan. Residues 600 to 620 (ALVAIFLCILTITVITLLIIL) form a helical membrane-spanning segment. The interval 621–660 (RRRIRKQAHAHSKSALEIHEQLVTYDEEGGGEMDTTSYDV) is required for interaction with PALS1. Residues 621–784 (RRRIRKQAHA…GSDPQEELII (164 aa)) are Cytoplasmic-facing.

In terms of assembly, part of a complex composed of AMOTL2, MAGI1 and CDH5, within the complex AMOTL2 acts as a scaffold protein for the interaction of MAGI1 with CDH5. The complex is required for coupling actin fibers to cell junctions in endothelial cells. Within the complex AMOTL2 (via its N-terminus) interacts with CDH5. Interacts (via cadherin 5 domain) with PTPRB. Interacts with TRPC4. Interacts with KRIT1. Interacts with PARD3. Interacts with RTN4 (isoform B). Interacts with PALS1; the interaction promotes PALS1 localization to cell junctions and is required for CDH5-mediated vascular lumen formation and endothelial cell polarity. Interacts with CTNND1/p120-catenin; the interaction controls CADH5 endocytosis. Phosphorylated on tyrosine residues by KDR/VEGFR-2. Dephosphorylated by PTPRB. In terms of processing, O-glycosylated. In terms of tissue distribution, expressed in postnatal endothelial cells of the retinal vascular plexus (at protein level).

It is found in the cell junction. It localises to the adherens junction. The protein localises to the cell membrane. Its subcellular location is the cytoplasm. Cadherins are calcium-dependent cell adhesion proteins. They preferentially interact with themselves in a homophilic manner in connecting cells; cadherins may thus contribute to the sorting of heterogeneous cell types. This cadherin may play an important role in endothelial cell biology through control of the cohesion and organization of the intercellular junctions. It associates with alpha-catenin forming a link to the cytoskeleton. Plays a role in coupling actin fibers to cell junctions in endothelial cells, via acting as a cell junctional complex anchor for AMOTL2 and MAGI1. Acts in concert with KRIT1 and PALS1 to establish and maintain correct endothelial cell polarity and vascular lumen. These effects are mediated by recruitment and activation of the Par polarity complex and RAP1B. Required for activation of PRKCZ and for localization of phosphorylated PRKCZ, PARD3, TIAM1 and RAP1B to the cell junction. Associates with CTNND1/p120-catenin to control CADH5 endocytosis. The chain is Cadherin-5 from Mus musculus (Mouse).